A 469-amino-acid chain; its full sequence is 6-phosphofructo-2-kinase/fructose-2,6-bisphosphatase 4 (469 aa).

Residues 1 to 249 (MASPRELTQN…YYLMNIHVTP (249 aa)) form a 6-phosphofructo-2-kinase region. 46-54 (GLPARGKTY) contacts ATP. Residues Arg-79 and Arg-103 each coordinate beta-D-fructose 6-phosphate. Residue Asp-129 is part of the active site. Residues Thr-131 and Arg-137 each coordinate beta-D-fructose 6-phosphate. Cys-159 is an active-site residue. 168–173 (NIVQVK) contacts ATP. Residues Lys-173, Arg-194, and Tyr-198 each coordinate beta-D-fructose 6-phosphate. A fructose-2,6-bisphosphatase region spans residues 250 to 469 (RSIYLCRHGE…EALVTVPAHQ (220 aa)). Arg-256 contributes to the beta-D-fructose 2,6-bisphosphate binding site. His-257 functions as the Tele-phosphohistidine intermediate in the catalytic mechanism. Positions 263, 269, and 306 each coordinate beta-D-fructose 2,6-bisphosphate. Glu-326 acts as the Proton donor/acceptor in catalysis. 6 residues coordinate beta-D-fructose 2,6-bisphosphate: Tyr-337, Arg-351, Lys-355, Tyr-366, Gln-392, and Arg-396. 348–351 (FALR) contributes to the ATP binding site. ATP is bound by residues 392–396 (QAVMR) and Tyr-428. The residue at position 444 (Thr-444) is a Phosphothreonine; by PKC.

The protein in the C-terminal section; belongs to the phosphoglycerate mutase family. As to quaternary structure, homodimer.

It catalyses the reaction beta-D-fructose 2,6-bisphosphate + H2O = beta-D-fructose 6-phosphate + phosphate. The enzyme catalyses beta-D-fructose 6-phosphate + ATP = beta-D-fructose 2,6-bisphosphate + ADP + H(+). With respect to regulation, the most important regulatory mechanism of these opposing activities is by phosphorylation and dephosphorylation of the enzyme. Its function is as follows. Synthesis and degradation of fructose 2,6-bisphosphate. The protein is 6-phosphofructo-2-kinase/fructose-2,6-bisphosphatase 4 (PFKFB4) of Homo sapiens (Human).